A 178-amino-acid polypeptide reads, in one-letter code: Dual-action ribosomal maturation protein DarP (178 aa).

The protein belongs to the DarP family.

The protein localises to the cytoplasm. Functionally, member of a network of 50S ribosomal subunit biogenesis factors which assembles along the 30S-50S interface, preventing incorrect 23S rRNA structures from forming. Promotes peptidyl transferase center (PTC) maturation. This Haemophilus influenzae (strain PittEE) protein is Dual-action ribosomal maturation protein DarP.